A 328-amino-acid chain; its full sequence is Apoptosis facilitator Bcl-2-like protein 14 (328 aa).

Residue Ser44 is modified to Phosphoserine. Residues 213-227 carry the BH3 motif; the sequence is IVELLKFSGDQLGRE. The BH2 signature appears at 309-316; that stretch reads WVQQNGGW.

This sequence belongs to the Bcl-2 family. Phosphorylated by MELK, leading to inhibit its pro-apoptotic function.

Its subcellular location is the cytoplasm. In terms of biological role, plays a role in apoptosis. The chain is Apoptosis facilitator Bcl-2-like protein 14 (Bcl2l14) from Mus musculus (Mouse).